Consider the following 364-residue polypeptide: Eukaryotic translation initiation factor 3 subunit H (364 aa).

Residues Val-13 to Phe-162 form the MPN domain.

The protein belongs to the eIF-3 subunit H family. As to quaternary structure, component of the eukaryotic translation initiation factor 3 (eIF-3) complex.

The protein resides in the cytoplasm. Component of the eukaryotic translation initiation factor 3 (eIF-3) complex, which is involved in protein synthesis of a specialized repertoire of mRNAs and, together with other initiation factors, stimulates binding of mRNA and methionyl-tRNAi to the 40S ribosome. The eIF-3 complex specifically targets and initiates translation of a subset of mRNAs involved in cell proliferation. The chain is Eukaryotic translation initiation factor 3 subunit H from Phaeosphaeria nodorum (strain SN15 / ATCC MYA-4574 / FGSC 10173) (Glume blotch fungus).